A 203-amino-acid polypeptide reads, in one-letter code: Large ribosomal subunit protein bL25 (203 aa).

The protein belongs to the bacterial ribosomal protein bL25 family. CTC subfamily. In terms of assembly, part of the 50S ribosomal subunit; part of the 5S rRNA/L5/L18/L25 subcomplex. Contacts the 5S rRNA. Binds to the 5S rRNA independently of L5 and L18.

Functionally, this is one of the proteins that binds to the 5S RNA in the ribosome where it forms part of the central protuberance. This chain is Large ribosomal subunit protein bL25, found in Rickettsia prowazekii (strain Madrid E).